Consider the following 412-residue polypeptide: Divalent metal cation transporter MntH (412 aa).

A run of 10 helical transmembrane segments spans residues 19-39 (LSLM…GNFA), 46-66 (AAYG…AMLI), 98-118 (WVQA…GAAI), 122-142 (LLLG…TFLI), 155-175 (MVIG…LVFS), 196-216 (AVLL…IYLH), 241-261 (IAMT…AAAF), 286-306 (AAAV…TVVG), 348-368 (VLVL…VPLL), and 392-412 (LIVV…MSGI).

The protein belongs to the NRAMP family.

The protein localises to the cell inner membrane. In terms of biological role, h(+)-stimulated, divalent metal cation uptake system. The sequence is that of Divalent metal cation transporter MntH from Pectobacterium carotovorum subsp. carotovorum (strain PC1).